The following is a 313-amino-acid chain: tRNA dimethylallyltransferase (313 aa).

9–16 (GPTATGKS) is a binding site for ATP. Residue 11–16 (TATGKS) coordinates substrate.

This sequence belongs to the IPP transferase family. Monomer. It depends on Mg(2+) as a cofactor.

It catalyses the reaction adenosine(37) in tRNA + dimethylallyl diphosphate = N(6)-dimethylallyladenosine(37) in tRNA + diphosphate. Catalyzes the transfer of a dimethylallyl group onto the adenine at position 37 in tRNAs that read codons beginning with uridine, leading to the formation of N6-(dimethylallyl)adenosine (i(6)A). The protein is tRNA dimethylallyltransferase of Mycobacteroides abscessus (strain ATCC 19977 / DSM 44196 / CCUG 20993 / CIP 104536 / JCM 13569 / NCTC 13031 / TMC 1543 / L948) (Mycobacterium abscessus).